Reading from the N-terminus, the 189-residue chain is UPF0398 protein lp_1753 (189 aa).

Belongs to the UPF0398 family.

This chain is UPF0398 protein lp_1753, found in Lactiplantibacillus plantarum (strain ATCC BAA-793 / NCIMB 8826 / WCFS1) (Lactobacillus plantarum).